A 448-amino-acid chain; its full sequence is Glutamyl-tRNA reductase (448 aa).

Substrate contacts are provided by residues 49-52 (TCNR), Ser-109, 114-116 (ETQ), and Gln-120. Cys-50 serves as the catalytic Nucleophile. 189–194 (GAGEMS) contributes to the NADP(+) binding site.

It belongs to the glutamyl-tRNA reductase family. In terms of assembly, homodimer.

It carries out the reaction (S)-4-amino-5-oxopentanoate + tRNA(Glu) + NADP(+) = L-glutamyl-tRNA(Glu) + NADPH + H(+). It participates in porphyrin-containing compound metabolism; protoporphyrin-IX biosynthesis; 5-aminolevulinate from L-glutamyl-tRNA(Glu): step 1/2. Functionally, catalyzes the NADPH-dependent reduction of glutamyl-tRNA(Glu) to glutamate 1-semialdehyde (GSA). In Staphylococcus aureus (strain MRSA252), this protein is Glutamyl-tRNA reductase.